The primary structure comprises 211 residues: SAGA-associated factor 11 homolog (211 aa).

The SGF11-type zinc finger occupies 115–136 (CTCPHCDRLVAAARFAPHLEKC). The tract at residues 153–211 (TKEGASASSSSTSTYIQSGGNTGGTDDEDDVDWSSDKRKKKSTQNSRNNGSKKNNGKIF) is disordered. Residues 157–166 (ASASSSSTST) are compositionally biased toward low complexity. Residue S187 is modified to Phosphoserine. Residues 197–211 (NSRNNGSKKNNGKIF) show a composition bias toward low complexity.

This sequence belongs to the SGF11 family. As to quaternary structure, component of some SAGA transcription coactivator-HAT complexes, at least composed of Ada2b, not/nonstop, Pcaf/Gcn5, Sgf11 and Spt3. Within the SAGA complex, Sgf11, e(y)2, and not/nonstop form an additional subcomplex of SAGA called the DUB module (deubiquitination module). Interacts directly with not/nonstop. Interacts with the AMEX complex component xmas-2. Interacts with Cbp80; important for promoter recruitment of Sgf11 that is not associated with the DUB module.

The protein resides in the nucleus. It localises to the nucleoplasm. Its subcellular location is the cytoplasm. Its function is as follows. Component of the transcription regulatory histone acetylation (HAT) complex SAGA, a multiprotein complex that activates transcription by remodeling chromatin and mediating histone acetylation and deubiquitination. Within the SAGA complex, participates in a subcomplex that specifically deubiquitinates histone H2B. The SAGA complex is recruited to specific gene promoters by activators, where it is required for transcription. Required for nuclear receptor-mediated transactivation. Binds independently on SAGA to promoters in an RNA-dependent manner. Binds to mRNA and is essential for total mRNA export from the nucleus. Required to counteract heterochromatin silencing. Controls the development of neuronal connectivity in visual system by being required for accurate axon targeting in the optic lobe. Required for expression of ecdysone-induced genes such as br/broad. This is SAGA-associated factor 11 homolog from Drosophila mojavensis (Fruit fly).